The primary structure comprises 469 residues: MKKKVIDFIKENSMIKSGDKVLVALSGGPDSVCLLHILSELRELLHIEVYAAHVNHCLRGESALKDEAYVEELCKNLNIKCFVKRVDINKISEEQNISTEMAGREERYKFFEELKNEYSLDKIAIAHNANDQAETLIMRALRGTGIEGLVGIKPVRDGIFIRPILILRRKEIEEYCEINNLNPRIDETNLEEIYSRNKIRLKAIPFIEDNFNPDIVATLNRLAYSCSKDVEFIQEEVEKRFPKLCIKENHSILIKEEAFNEKEALLTRIIKKALFEVSSKHNNFELKHIQDIIALKDKGTGKQINITNGVIALNEYGDIRIKLVDSKKAKENKVLNLENIKDELDKNQKVVIEDDILGNYELIVEDLKKGEKFSKDRFIKSFDYDKISNIDIRFRQNGDKIIPLGMKSSKKLKDIFINNKIPKEERDFIPLVLFNNEIAWIVGSNVSETFKVTNKTKKVIKITFKGKEN.

26-31 contacts ATP; it reads SGGPDS.

This sequence belongs to the tRNA(Ile)-lysidine synthase family.

The protein resides in the cytoplasm. The enzyme catalyses cytidine(34) in tRNA(Ile2) + L-lysine + ATP = lysidine(34) in tRNA(Ile2) + AMP + diphosphate + H(+). Its function is as follows. Ligates lysine onto the cytidine present at position 34 of the AUA codon-specific tRNA(Ile) that contains the anticodon CAU, in an ATP-dependent manner. Cytidine is converted to lysidine, thus changing the amino acid specificity of the tRNA from methionine to isoleucine. This is tRNA(Ile)-lysidine synthase from Clostridium perfringens (strain 13 / Type A).